An 864-amino-acid polypeptide reads, in one-letter code: MDVSLCPAKCSFWRIFLLGSVWLDYVGSVLACPANCVCSKTEINCRRPDDGNLFPLLEGQDSGNSNGNASINITDISRNITSIHIENWRGLHTLNAVDMELYTGLQKLTIKNSGLRNIQPRAFAKNPHLRYINLSSNRLTTLSWQLFQTLSLRELRLEQNFFNCSCDIRWMQLWQEQGEARLDSQSLYCISADGSQLPLFRMNISQCDLPEISVSHVNLTVREGDNAVITCNGSGSPLPDVDWIVTGLQSINTHQTNLNWTNVHAINLTLVNVTSEDNGFTLTCIAENVVGMSNASVALTVYYPPRVVSLVEPEVRLEHCIEFVVRGNPTPTLHWLYNGQPLRESKIIHMDYYQEGEVSEGCLLFNKPTHYNNGNYTLIAKNALGTANQTINGHFLKEPFPESTDFFDFESDASPTPPITVTHKPEEDTFGVSIAVGLAAFACVLLVVLFIMINKYGRRSKFGMKGPVAVISGEEDSASPLHHINHGITTPSSLDAGPDTVVIGMTRIPVIENPQYFRQGHNCHKPDTYVQHIKRRDIVLKRELGEGAFGKVFLAECYNLSPTKDKMLVAVKALKDPTLAARKDFQREAELLTNLQHEHIVKFYGVCGDGDPLIMVFEYMKHGDLNKFLRAHGPDAMILVDGQPRQAKGELGLSQMLHIASQIASGMVYLASQHFVHRDLATRNCLVGANLLVKIGDFGMSRDVYSTDYYREGPYQKGPFSVSWQQQRLAASAASTLFNPSGNDFCIWCEVGGHTMLPIRWMPPESIMYRKFTTESDVWSFGVILWEIFTYGKQPWFQLSNTEVIECITQGRVLERPRVCPKEVYDVMLGCWQREPQQRLNIKEIYKILHALGKATPIYLDILG.

The first 31 residues, 1-31 (MDVSLCPAKCSFWRIFLLGSVWLDYVGSVLA), serve as a signal peptide directing secretion. Intrachain disulfides connect C32-C38 and C36-C45. The Extracellular portion of the chain corresponds to 32-429 (CPANCVCSKT…TVTHKPEEDT (398 aa)). N-linked (GlcNAc...) asparagine glycans are attached at residues N68, N72, and N79. LRR repeat units follow at residues 104-125 (GLQK…AFAK) and 128-149 (HLRY…LFQT). N133 and N163 each carry an N-linked (GlcNAc...) asparagine glycan. The 50-residue stretch at 160–209 (NFFNCSCDIRWMQLWQEQGEARLDSQSLYCISADGSQLPLFRMNISQCDL) folds into the LRRCT domain. Intrachain disulfides connect C164–C189 and C166–C207. N-linked (GlcNAc...) asparagine glycosylation is found at N203, N218, N232, N259, N267, N272, and N294. 2 consecutive Ig-like C2-type domains span residues 210-300 (PEIS…VALT) and 309-382 (SLVE…IAKN). An intrachain disulfide couples C231 to C284. A disulfide bridge links C320 with C362. N-linked (GlcNAc...) asparagine glycans are attached at residues N375 and N388. The helical transmembrane segment at 430–453 (FGVSIAVGLAAFACVLLVVLFIMI) threads the bilayer. At 454–864 (NKYGRRSKFG…ATPIYLDILG (411 aa)) the chain is on the cytoplasmic side. S493 carries the post-translational modification Phosphoserine. Y516 is modified (phosphotyrosine; by autocatalysis). Residues 538 to 853 (IVLKRELGEG…EIYKILHALG (316 aa)) form the Protein kinase domain. ATP-binding positions include 544–552 (LGEGAFGKV) and K572. The Proton acceptor role is filled by D679. Phosphotyrosine; by autocatalysis is present on residues Y705, Y709, Y710, and Y859.

It belongs to the protein kinase superfamily. Tyr protein kinase family. Insulin receptor subfamily. Exists in a dynamic equilibrium between monomeric (low affinity) and dimeric (high affinity) structures. Binds SH2B2. Interacts with SQSTM1 and KIDINS220. Interacts with PTPRS. Interacts with MAPK8IP3/JIP3. In terms of processing, ligand-mediated auto-phosphorylation. Widely expressed, mainly in the nervous tissue.

It localises to the membrane. The catalysed reaction is L-tyrosyl-[protein] + ATP = O-phospho-L-tyrosyl-[protein] + ADP + H(+). Receptor tyrosine kinase involved in nervous system and probably heart development. Upon binding of its ligand NTF3/neurotrophin-3, NTRK3 autophosphorylates and activates different signaling pathways, including the phosphatidylinositol 3-kinase/AKT and the MAPK pathways, that control cell survival and differentiation. NTRK3 isoforms containing insertions within the kinase domain can autophosphorylate in response to NTF3/neurotrophin-3, but cannot mediate downstream phenotypic responses. This is NT-3 growth factor receptor (Ntrk3) from Rattus norvegicus (Rat).